A 402-amino-acid polypeptide reads, in one-letter code: Phosphoglycerate kinase (402 aa).

Substrate-binding positions include 24–26 (DLN), Arg-39, 62–65 (HLGR), Arg-121, and Arg-161. Residues Lys-211, Gly-299, Glu-330, and 359–362 (GGDS) each bind ATP.

This sequence belongs to the phosphoglycerate kinase family. In terms of assembly, monomer.

The protein resides in the cytoplasm. The catalysed reaction is (2R)-3-phosphoglycerate + ATP = (2R)-3-phospho-glyceroyl phosphate + ADP. Its pathway is carbohydrate degradation; glycolysis; pyruvate from D-glyceraldehyde 3-phosphate: step 2/5. In Corynebacterium urealyticum (strain ATCC 43042 / DSM 7109), this protein is Phosphoglycerate kinase.